A 72-amino-acid polypeptide reads, in one-letter code: Prophage late control protein OgrK (72 aa).

Cryptic version of the phage P2 OGR protein which acts as an activator of P2 late transcription. This Escherichia coli (strain K12) protein is Prophage late control protein OgrK (ogrK).